The following is a 614-amino-acid chain: DNA mismatch repair protein MutL (614 aa).

The protein belongs to the DNA mismatch repair MutL/HexB family.

Its function is as follows. This protein is involved in the repair of mismatches in DNA. It is required for dam-dependent methyl-directed DNA mismatch repair. May act as a 'molecular matchmaker', a protein that promotes the formation of a stable complex between two or more DNA-binding proteins in an ATP-dependent manner without itself being part of a final effector complex. The chain is DNA mismatch repair protein MutL from Chlorobium phaeovibrioides (strain DSM 265 / 1930) (Prosthecochloris vibrioformis (strain DSM 265)).